The primary structure comprises 185 residues: Peptidyl-tRNA hydrolase (185 aa).

Residue Phe-12 coordinates tRNA. Residue His-17 is the Proton acceptor of the active site. TRNA is bound by residues Tyr-61, Asn-63, and Asn-109.

It belongs to the PTH family. Monomer.

Its subcellular location is the cytoplasm. It catalyses the reaction an N-acyl-L-alpha-aminoacyl-tRNA + H2O = an N-acyl-L-amino acid + a tRNA + H(+). Its function is as follows. Hydrolyzes ribosome-free peptidyl-tRNAs (with 1 or more amino acids incorporated), which drop off the ribosome during protein synthesis, or as a result of ribosome stalling. In terms of biological role, catalyzes the release of premature peptidyl moieties from peptidyl-tRNA molecules trapped in stalled 50S ribosomal subunits, and thus maintains levels of free tRNAs and 50S ribosomes. The polypeptide is Peptidyl-tRNA hydrolase (Borrelia garinii subsp. bavariensis (strain ATCC BAA-2496 / DSM 23469 / PBi) (Borreliella bavariensis)).